A 359-amino-acid polypeptide reads, in one-letter code: DNA polymerase IV (359 aa).

Residues Ile7 to Gly188 form the UmuC domain. Asp11 and Asp106 together coordinate Mg(2+). Glu107 is a catalytic residue.

This sequence belongs to the DNA polymerase type-Y family. Monomer. Mg(2+) is required as a cofactor.

The protein localises to the cytoplasm. The catalysed reaction is DNA(n) + a 2'-deoxyribonucleoside 5'-triphosphate = DNA(n+1) + diphosphate. Poorly processive, error-prone DNA polymerase involved in untargeted mutagenesis. Copies undamaged DNA at stalled replication forks, which arise in vivo from mismatched or misaligned primer ends. These misaligned primers can be extended by PolIV. Exhibits no 3'-5' exonuclease (proofreading) activity. May be involved in translesional synthesis, in conjunction with the beta clamp from PolIII. This Clostridium perfringens (strain ATCC 13124 / DSM 756 / JCM 1290 / NCIMB 6125 / NCTC 8237 / Type A) protein is DNA polymerase IV.